Here is a 675-residue protein sequence, read N- to C-terminus: DNA ligase (675 aa).

NAD(+) contacts are provided by residues 32 to 36 (DAEYD), 81 to 82 (SL), and Glu-113. Lys-115 (N6-AMP-lysine intermediate) is an active-site residue. NAD(+)-binding residues include Arg-136, Glu-173, Lys-291, and Lys-315. Positions 409, 412, 427, and 433 each coordinate Zn(2+). The BRCT domain maps to 595–675 (SEKTYFFNKK…ELNSLIRIKE (81 aa)).

It belongs to the NAD-dependent DNA ligase family. LigA subfamily. Requires Mg(2+) as cofactor. Mn(2+) serves as cofactor.

It carries out the reaction NAD(+) + (deoxyribonucleotide)n-3'-hydroxyl + 5'-phospho-(deoxyribonucleotide)m = (deoxyribonucleotide)n+m + AMP + beta-nicotinamide D-nucleotide.. Its function is as follows. DNA ligase that catalyzes the formation of phosphodiester linkages between 5'-phosphoryl and 3'-hydroxyl groups in double-stranded DNA using NAD as a coenzyme and as the energy source for the reaction. It is essential for DNA replication and repair of damaged DNA. The polypeptide is DNA ligase (Buchnera aphidicola subsp. Acyrthosiphon pisum (strain APS) (Acyrthosiphon pisum symbiotic bacterium)).